A 269-amino-acid polypeptide reads, in one-letter code: Glutamate racemase (269 aa).

Residues 14-15 and 46-47 each bind substrate; these read DS and YS. Cysteine 78 acts as the Proton donor/acceptor in catalysis. 79–80 is a binding site for substrate; sequence NT. Catalysis depends on cysteine 189, which acts as the Proton donor/acceptor. A substrate-binding site is contributed by 190-191; it reads TH.

The protein belongs to the aspartate/glutamate racemases family.

It catalyses the reaction L-glutamate = D-glutamate. Its pathway is cell wall biogenesis; peptidoglycan biosynthesis. Its function is as follows. Provides the (R)-glutamate required for cell wall biosynthesis. The protein is Glutamate racemase of Haemophilus influenzae (strain 86-028NP).